Reading from the N-terminus, the 277-residue chain is MNNENLVIYILSDSIGETAEQVAKAAISQFDTEDYEIRRFPFITEKHHIDEMLQEAKKENSVIVFTMVVEELRNYIMEEAEKMQIRSIDIMSPVLHAMGGALTTTPKREPGLIRRLDEKYFRKVEAIEFAVKYDDGKDSRGLAKADIVLVGISRTSKTPLSMYLAHRNMKVANVPLVPEVTPPKELYEVPSQKIIGLTTNPIKLIEIRQERLKALGLKNEASYASMERILEELEYAEGIMKRIGCPVIDVSTKAVEESAGIILEIFRDRGYNMPNGR.

151–158 (GISRTSKT) is an ADP binding site.

It belongs to the pyruvate, phosphate/water dikinase regulatory protein family. PDRP subfamily.

It carries out the reaction N(tele)-phospho-L-histidyl/L-threonyl-[pyruvate, phosphate dikinase] + ADP = N(tele)-phospho-L-histidyl/O-phospho-L-threonyl-[pyruvate, phosphate dikinase] + AMP + H(+). The catalysed reaction is N(tele)-phospho-L-histidyl/O-phospho-L-threonyl-[pyruvate, phosphate dikinase] + phosphate + H(+) = N(tele)-phospho-L-histidyl/L-threonyl-[pyruvate, phosphate dikinase] + diphosphate. Functionally, bifunctional serine/threonine kinase and phosphorylase involved in the regulation of the pyruvate, phosphate dikinase (PPDK) by catalyzing its phosphorylation/dephosphorylation. The sequence is that of Putative pyruvate, phosphate dikinase regulatory protein from Alkaliphilus metalliredigens (strain QYMF).